The following is a 122-amino-acid chain: Large ribosomal subunit protein uL14c (122 aa).

It belongs to the universal ribosomal protein uL14 family. Part of the 50S ribosomal subunit.

The protein localises to the plastid. Its subcellular location is the chloroplast. Binds to 23S rRNA. This is Large ribosomal subunit protein uL14c from Pleurastrum terricola (Filamentous green alga).